Here is a 243-residue protein sequence, read N- to C-terminus: Anti-H(O) lectin 1 (243 aa).

N-linked (GlcNAc...) asparagine; partial glycosylation occurs at N10. N116 carries an N-linked (GlcNAc...) asparagine glycan. Mn(2+) contacts are provided by E126 and D128. Positions 128, 135, and 138 each coordinate Ca(2+). The Mn(2+) site is built by D138 and H143.

The protein belongs to the leguminous lectin family.

L-fucose specific lectin. This chain is Anti-H(O) lectin 1, found in Ulex europaeus (Furze).